A 127-amino-acid polypeptide reads, in one-letter code: Small ribosomal subunit protein bS6 (127 aa).

Residues 99–127 (PLPAPRVVPGSEPAAAPQEQPAANSEAAS) are disordered. The span at 109–127 (SEPAAAPQEQPAANSEAAS) shows a compositional bias: low complexity.

Belongs to the bacterial ribosomal protein bS6 family.

Functionally, binds together with bS18 to 16S ribosomal RNA. The chain is Small ribosomal subunit protein bS6 from Parasynechococcus marenigrum (strain WH8102).